We begin with the raw amino-acid sequence, 650 residues long: Chaperone protein DnaK (650 aa).

Thr-200 carries the post-translational modification Phosphothreonine; by autocatalysis. The span at 612–636 (QQAGAAGAAGAAEGAAHAGGAQQAA) shows a compositional bias: low complexity. Residues 612–650 (QQAGAAGAAGAAEGAAHAGGAQQAADDVVDAEFKEVKKD) form a disordered region.

The protein belongs to the heat shock protein 70 family.

Acts as a chaperone. The sequence is that of Chaperone protein DnaK from Burkholderia ambifaria (strain ATCC BAA-244 / DSM 16087 / CCUG 44356 / LMG 19182 / AMMD) (Burkholderia cepacia (strain AMMD)).